Consider the following 478-residue polypeptide: Transposase for insertion sequence element IS231E (478 aa).

Belongs to the transposase 11 family.

In terms of biological role, involved in the transposition of the insertion sequence. In Bacillus thuringiensis subsp. finitimus, this protein is Transposase for insertion sequence element IS231E.